The sequence spans 334 residues: Serine/Arginine-related protein 53 (334 aa).

The segment covering 1–13 (MGRRSSDTEEESR) has biased composition (basic and acidic residues). 3 disordered regions span residues 1–179 (MGRR…HLPP), 201–220 (LKAK…EDQA), and 243–290 (QTFR…SIPT). Basic residues-rich tracts occupy residues 14-24 (SKRKKKHRRRS) and 35-50 (YSRK…KSRS). The span at 51–62 (WSRDLQPRSHSY) shows a compositional bias: basic and acidic residues. The segment covering 78–118 (SRRKRSRSRSRGRGKSYRVQRSRSKSRTRRSRSRPRLRSHS) has biased composition (basic residues). Composition is skewed to basic and acidic residues over residues 132 to 166 (RSRD…KRGE), 201 to 218 (LKAK…KEED), and 247 to 259 (SSKE…EPSE). The stretch at 180–236 (AEQAKARLQLVLEAAAKADEALKAKERNEEEAKRRKEEDQATLVEQVKRVKEIEAIE) forms a coiled coil.

As to quaternary structure, interacts (via Arg/Ser-rich domain) with LUC7L3, RBM39 and RSF1. Phosphorylated. Widely expressed. Expressed in brain, spinal cord, cerebellum.

It localises to the nucleus. The protein resides in the nucleus speckle. The protein localises to the cytoplasm. In terms of biological role, has a role in alternative splicing and transcription regulation. Involved in both constitutive and alternative pre-mRNA splicing. May have a role in the recognition of the 3' splice site during the second step of splicing. This Homo sapiens (Human) protein is Serine/Arginine-related protein 53 (RSRC1).